Here is a 188-residue protein sequence, read N- to C-terminus: uncharacterized protein (188 aa).

A run of 3 helical transmembrane segments spans residues 6 to 26 (MIVFMLLMVEIVSFVILSLPL), 43 to 63 (FAGRVKHVLKITIICILILFA), and 110 to 130 (ALFLSLVVNRYYLALEAMIAA).

It localises to the membrane. This is an uncharacterized protein from Schizosaccharomyces pombe (strain 972 / ATCC 24843) (Fission yeast).